The chain runs to 176 residues: Large ribosomal subunit protein eL20 (176 aa).

It belongs to the eukaryotic ribosomal protein eL20 family. In terms of assembly, component of the large ribosomal subunit.

It is found in the cytoplasm. Functionally, component of the large ribosomal subunit. The ribosome is a large ribonucleoprotein complex responsible for the synthesis of proteins in the cell. The protein is Large ribosomal subunit protein eL20 (rpl18a) of Ictalurus punctatus (Channel catfish).